The following is a 148-amino-acid chain: Lysozyme C-1 (148 aa).

Residues 1 to 18 (MKALLTLGLLLLSVTAQA) form the signal peptide. A C-type lysozyme domain is found at 19 to 148 (KVYNRCELAR…LSQYIRNCGV (130 aa)). 4 disulfides stabilise this stretch: cysteine 24/cysteine 146, cysteine 48/cysteine 134, cysteine 83/cysteine 99, and cysteine 95/cysteine 113. Catalysis depends on residues glutamate 53 and aspartate 71.

The protein belongs to the glycosyl hydrolase 22 family. In terms of assembly, monomer. In terms of tissue distribution, expressed strongly only in small intestine.

It is found in the secreted. It carries out the reaction Hydrolysis of (1-&gt;4)-beta-linkages between N-acetylmuramic acid and N-acetyl-D-glucosamine residues in a peptidoglycan and between N-acetyl-D-glucosamine residues in chitodextrins.. Lysozymes have primarily a bacteriolytic function; those in tissues and body fluids are associated with the monocyte-macrophage system and enhance the activity of immunoagents. Lyz1 is active against a range of Gram-positive and Gram-negative bacteria. Less effective than Lyz2 in killing Gram-negative bacteria. Lyz1 and Lyz2 are equally effective in killing Gram-positive bacteria. The chain is Lysozyme C-1 (Lyz1) from Mus musculus (Mouse).